The chain runs to 250 residues: Phosphoribosylaminoimidazole-succinocarboxamide synthase (250 aa).

The protein belongs to the SAICAR synthetase family.

The enzyme catalyses 5-amino-1-(5-phospho-D-ribosyl)imidazole-4-carboxylate + L-aspartate + ATP = (2S)-2-[5-amino-1-(5-phospho-beta-D-ribosyl)imidazole-4-carboxamido]succinate + ADP + phosphate + 2 H(+). Its pathway is purine metabolism; IMP biosynthesis via de novo pathway; 5-amino-1-(5-phospho-D-ribosyl)imidazole-4-carboxamide from 5-amino-1-(5-phospho-D-ribosyl)imidazole-4-carboxylate: step 1/2. The chain is Phosphoribosylaminoimidazole-succinocarboxamide synthase from Parasynechococcus marenigrum (strain WH8102).